The following is a 255-amino-acid chain: Staphylococcal secretory antigen ssaA1 (255 aa).

An N-terminal signal peptide occupies residues 1–26 (MKKIVTATIATAGLATIAFAGHDAQA). A run of 3 repeats spans residues 75 to 78 (YNNY), 88 to 91 (YNNY), and 98 to 101 (YNNY). The segment at 75-101 (YNNYNTYSYNNASYNNYYNHSYQYNNY) is 3 X 4 AA repeats of Y-N-N-Y. The Peptidase C51 domain maps to 134–255 (AAPSSNGRSI…NQAGSYNFIH (122 aa)).

Its subcellular location is the secreted. In terms of biological role, not known; immunogenic protein. The sequence is that of Staphylococcal secretory antigen ssaA1 (ssaA1) from Staphylococcus aureus (strain MW2).